We begin with the raw amino-acid sequence, 205 residues long: Orotate phosphoribosyltransferase (205 aa).

116 to 124 (EDIITTGGS) provides a ligand contact to 5-phospho-alpha-D-ribose 1-diphosphate. Residues Thr-120 and Arg-148 each coordinate orotate.

This sequence belongs to the purine/pyrimidine phosphoribosyltransferase family. PyrE subfamily. In terms of assembly, homodimer. The cofactor is Mg(2+).

The catalysed reaction is orotidine 5'-phosphate + diphosphate = orotate + 5-phospho-alpha-D-ribose 1-diphosphate. It functions in the pathway pyrimidine metabolism; UMP biosynthesis via de novo pathway; UMP from orotate: step 1/2. Functionally, catalyzes the transfer of a ribosyl phosphate group from 5-phosphoribose 1-diphosphate to orotate, leading to the formation of orotidine monophosphate (OMP). In Wolinella succinogenes (strain ATCC 29543 / DSM 1740 / CCUG 13145 / JCM 31913 / LMG 7466 / NCTC 11488 / FDC 602W) (Vibrio succinogenes), this protein is Orotate phosphoribosyltransferase.